The following is a 280-amino-acid chain: uncharacterized protein (280 aa).

N-linked (GlcNAc...) asparagine; by host glycosylation is found at Asn75, Asn98, Asn107, Asn143, Asn158, Asn170, Asn192, Asn207, Asn224, and Asn230. A helical transmembrane segment spans residues 235–255 (AFTYGSWGVAMLLFAAVMVLV).

This sequence belongs to the RL11 family.

It is found in the host membrane. This is an uncharacterized protein from Human cytomegalovirus (strain Merlin) (HHV-5).